The chain runs to 133 residues: Small ribosomal subunit protein uS11 (133 aa).

It belongs to the universal ribosomal protein uS11 family. In terms of assembly, part of the 30S ribosomal subunit. Interacts with proteins S7 and S18. Binds to IF-3.

Functionally, located on the platform of the 30S subunit, it bridges several disparate RNA helices of the 16S rRNA. Forms part of the Shine-Dalgarno cleft in the 70S ribosome. This is Small ribosomal subunit protein uS11 from Christiangramia forsetii (strain DSM 17595 / CGMCC 1.15422 / KT0803) (Gramella forsetii).